A 105-amino-acid chain; its full sequence is Integration host factor (105 aa).

Residues 64–71 (LPKVGKVK) carry the H2TH motif, binds DNA motif. The segment at 82–94 (APTRRLRGLGDRQ) is lid, binds DNA.

The protein belongs to the actinobacterial IHF (aIHF) family. Binds DNA as a monomer. In terms of assembly, (Microbial infection) Forms a complex with L5 Int and attP DNA. The complex binds attB to form products.

Its subcellular location is the cytoplasm. It localises to the nucleoid. A nucleoid-associated protein (NAP) that binds DNA without any sequence specificity. Compacts DNA. Binds along the whole chromosome in a dynamic manner, has equal affinity for the oriC site, attB and a randon 62% GC-rich sequence. Plays a role in transcription regulation. In terms of biological role, (Microbial infection) Stimulates temperate Mycobacterium phage L5 Int-mediated recombination in vitro using supercoiled attP (phage attachment site) DNA, linear attB DNA (bacterial attachment site) and L5 integrase (L5 Int or Int-L5, AC P22884). mIHF acts on L5 Int to stimulate formation of a specific intasome complex. mIHF probably stabilizes a sharp bend in the DNA during phage integration. The chain is Integration host factor from Mycolicibacterium smegmatis (strain ATCC 700084 / mc(2)155) (Mycobacterium smegmatis).